The sequence spans 561 residues: DNA mismatch repair protein MutL (561 aa).

Belongs to the DNA mismatch repair MutL/HexB family.

Functionally, this protein is involved in the repair of mismatches in DNA. It is required for dam-dependent methyl-directed DNA mismatch repair. May act as a 'molecular matchmaker', a protein that promotes the formation of a stable complex between two or more DNA-binding proteins in an ATP-dependent manner without itself being part of a final effector complex. In Rippkaea orientalis (strain PCC 8801 / RF-1) (Cyanothece sp. (strain PCC 8801)), this protein is DNA mismatch repair protein MutL.